Reading from the N-terminus, the 157-residue chain is Small ribosomal subunit protein uS7 (157 aa).

The protein belongs to the universal ribosomal protein uS7 family. In terms of assembly, part of the 30S ribosomal subunit. Contacts proteins S9 and S11.

In terms of biological role, one of the primary rRNA binding proteins, it binds directly to 16S rRNA where it nucleates assembly of the head domain of the 30S subunit. Is located at the subunit interface close to the decoding center, probably blocks exit of the E-site tRNA. The polypeptide is Small ribosomal subunit protein uS7 (Francisella tularensis subsp. tularensis (strain FSC 198)).